A 137-amino-acid chain; its full sequence is Ribonuclease kappa (137 aa).

2 helical membrane-spanning segments follow: residues 52-72 (ACGI…GIFF) and 104-124 (VSYN…FSFC).

It belongs to the RNase K family. As to quaternary structure, interacts with the proton translocation complex V0 of the V-ATPase. Interacts with ATP6AP1. As to expression, widely expressed.

It is found in the endomembrane system. It localises to the cytoplasmic vesicle. The protein resides in the clathrin-coated vesicle membrane. In terms of biological role, endoribonuclease which preferentially cleaves ApU and ApG phosphodiester bonds. Hydrolyzes UpU bonds at a lower rate. Regulates the activity of vacuolar (H+)-ATPase (V-ATPase) which is responsible for acidifying and maintaining the pH of intracellular compartments. Required at an early stage of receptor-mediated endocytosis. Functionally, (Microbial infection) Required at an early stage of both clathrin-mediated and clathrin-independent endocytic uptake of a diverse set of viruses, including dengue, West Nile, Sindbis, Rift Valley Fever, influenza, and human rhinoviruses. The protein is Ribonuclease kappa (RNASEK) of Homo sapiens (Human).